The chain runs to 330 residues: D-alanine--D-alanine ligase (330 aa).

The region spanning 122 to 323 (NRFLSGFGIR…MKEVLCTIIR (202 aa)) is the ATP-grasp domain. ATP is bound at residue 151–206 (TARMGLPLFVKPNVGGSSIATTKVVEAAQLLPAIGQAFSEGEEVMIERLICGTEVT). Mg(2+)-binding residues include Asp-277, Glu-290, and Asn-292.

The protein belongs to the D-alanine--D-alanine ligase family. The cofactor is Mg(2+). Mn(2+) is required as a cofactor.

The protein resides in the cytoplasm. The catalysed reaction is 2 D-alanine + ATP = D-alanyl-D-alanine + ADP + phosphate + H(+). The protein operates within cell wall biogenesis; peptidoglycan biosynthesis. Its function is as follows. Cell wall formation. The polypeptide is D-alanine--D-alanine ligase (Porphyromonas gingivalis (strain ATCC 33277 / DSM 20709 / CIP 103683 / JCM 12257 / NCTC 11834 / 2561)).